The chain runs to 121 residues: Small ribosomal subunit protein uS13 (121 aa).

Residues arginine 93–lysine 121 are disordered.

The protein belongs to the universal ribosomal protein uS13 family. As to quaternary structure, part of the 30S ribosomal subunit. Forms a loose heterodimer with protein S19. Forms two bridges to the 50S subunit in the 70S ribosome.

Its function is as follows. Located at the top of the head of the 30S subunit, it contacts several helices of the 16S rRNA. In the 70S ribosome it contacts the 23S rRNA (bridge B1a) and protein L5 of the 50S subunit (bridge B1b), connecting the 2 subunits; these bridges are implicated in subunit movement. Contacts the tRNAs in the A and P-sites. In Albidiferax ferrireducens (strain ATCC BAA-621 / DSM 15236 / T118) (Rhodoferax ferrireducens), this protein is Small ribosomal subunit protein uS13.